The chain runs to 499 residues: Probable malate:quinone oxidoreductase 4 (499 aa).

This sequence belongs to the MQO family. The cofactor is FAD.

It carries out the reaction (S)-malate + a quinone = a quinol + oxaloacetate. It functions in the pathway carbohydrate metabolism; tricarboxylic acid cycle; oxaloacetate from (S)-malate (quinone route): step 1/1. The polypeptide is Probable malate:quinone oxidoreductase 4 (Staphylococcus epidermidis (strain ATCC 12228 / FDA PCI 1200)).